The primary structure comprises 259 residues: MGNRKDHYYNKSKQEGYRSRAAYKLQQLDDRFDVLFGGASVVDLGAAPGGWLQVAAERAGARGKVVGVDFQSITQFETDAGLETVRGDMTEDETRQRVRDAANGSADVVVSDMAPDMTGEYDLDHARSVHLARQALETARELLDAGGHFVVKVFDGRDFQDLLADIEDEFAFVATHSPDASRDASSELYVVGKNHIVAPIAEGDEHTVEIVDTGDEGDGIARIEGYTLFVDDAAEGDTVDVTVTDLKPNYGFAERRDGA.

G49, W51, D69, D88, and D112 together coordinate S-adenosyl-L-methionine. K152 serves as the catalytic Proton acceptor. Residues 199 to 257 form the TRAM domain; sequence PIAEGDEHTVEIVDTGDEGDGIARIEGYTLFVDDAAEGDTVDVTVTDLKPNYGFAERRD.

It belongs to the class I-like SAM-binding methyltransferase superfamily. RNA methyltransferase RlmE family.

The protein localises to the cytoplasm. The catalysed reaction is uridine(2552) in 23S rRNA + S-adenosyl-L-methionine = 2'-O-methyluridine(2552) in 23S rRNA + S-adenosyl-L-homocysteine + H(+). Its function is as follows. Specifically methylates the uridine in position 2552 of 23S rRNA at the 2'-O position of the ribose in the fully assembled 50S ribosomal subunit. This Halobacterium salinarum (strain ATCC 29341 / DSM 671 / R1) protein is Ribosomal RNA large subunit methyltransferase E.